The primary structure comprises 112 residues: Class I hydrophobin 17 (112 aa).

The N-terminal stretch at 1–19 is a signal peptide; that stretch reads MYSQSMVLLAAAFASFVAA. 4 disulfide bridges follow: cysteine 30–cysteine 90, cysteine 37–cysteine 84, cysteine 38–cysteine 74, and cysteine 91–cysteine 104. Asparagine 108 carries N-linked (GlcNAc...) asparagine glycosylation.

The protein belongs to the fungal hydrophobin family. In terms of assembly, self-assembles to form functional amyloid fibrils called rodlets. Self-assembly into fibrillar rodlets occurs spontaneously at hydrophobic:hydrophilic interfaces and the rodlets further associate laterally to form amphipathic monolayers.

Its subcellular location is the secreted. It localises to the cell wall. In terms of biological role, aerial growth, conidiation, and dispersal of filamentous fungi in the environment rely upon a capability of their secreting small amphipathic proteins called hydrophobins (HPBs) with low sequence identity. Class I can self-assemble into an outermost layer of rodlet bundles on aerial cell surfaces, conferring cellular hydrophobicity that supports fungal growth, development and dispersal; whereas Class II form highly ordered films at water-air interfaces through intermolecular interactions but contribute nothing to the rodlet structure. Hydph17 is a class I hydrophobin involved in mycelial growth. This chain is Class I hydrophobin 17, found in Pleurotus ostreatus (strain PC15) (Oyster mushroom).